A 63-amino-acid polypeptide reads, in one-letter code: MKQSEVKELSVAELQEELGKSRKAYSDLKMAHAVSPLENPIQLRTVRRDVARLATELTKREQQ.

Belongs to the universal ribosomal protein uL29 family.

The protein is Large ribosomal subunit protein uL29 of Christiangramia forsetii (strain DSM 17595 / CGMCC 1.15422 / KT0803) (Gramella forsetii).